The primary structure comprises 245 residues: Ribosomal RNA large subunit methyltransferase E (245 aa).

The disordered stretch occupies residues 1-25; it reads MTKSPIGGNRSGRKLGQKVKKGKLK. The segment covering 11–25 has biased composition (basic residues); the sequence is SGRKLGQKVKKGKLK. G81, W83, D104, D120, and D144 together coordinate S-adenosyl-L-methionine. K184 acts as the Proton acceptor in catalysis.

Belongs to the class I-like SAM-binding methyltransferase superfamily. RNA methyltransferase RlmE family.

The protein localises to the cytoplasm. It catalyses the reaction uridine(2552) in 23S rRNA + S-adenosyl-L-methionine = 2'-O-methyluridine(2552) in 23S rRNA + S-adenosyl-L-homocysteine + H(+). Specifically methylates the uridine in position 2552 of 23S rRNA at the 2'-O position of the ribose in the fully assembled 50S ribosomal subunit. The polypeptide is Ribosomal RNA large subunit methyltransferase E (Sinorhizobium fredii (strain NBRC 101917 / NGR234)).